We begin with the raw amino-acid sequence, 249 residues long: tRNA pseudouridine synthase A (249 aa).

The Nucleophile role is filled by D53. Y111 contributes to the substrate binding site.

This sequence belongs to the tRNA pseudouridine synthase TruA family. As to quaternary structure, homodimer.

The enzyme catalyses uridine(38/39/40) in tRNA = pseudouridine(38/39/40) in tRNA. Formation of pseudouridine at positions 38, 39 and 40 in the anticodon stem and loop of transfer RNAs. The sequence is that of tRNA pseudouridine synthase A from Streptococcus suis (strain 05ZYH33).